The chain runs to 446 residues: Histidine--tRNA ligase (446 aa).

The protein belongs to the class-II aminoacyl-tRNA synthetase family. As to quaternary structure, homodimer.

It localises to the cytoplasm. It catalyses the reaction tRNA(His) + L-histidine + ATP = L-histidyl-tRNA(His) + AMP + diphosphate + H(+). In Paraburkholderia phymatum (strain DSM 17167 / CIP 108236 / LMG 21445 / STM815) (Burkholderia phymatum), this protein is Histidine--tRNA ligase.